A 300-amino-acid chain; its full sequence is MKNLTHLQRLEAEAIHVFREVAATFSNPVMLYSVGKDSSVMLHLAMKAFYPAPPPFPFLHVDTTWKFREMIEFRDAQAREKGFELLVHVNEQGVRDGIGPFTHGSNVHTHIMKTVGLRQALDKYRFDAAFGGARRDEEKSRAKERIFSFRNAQHGWDPKNQRPEMWKIYNTRVSKGESIRVFPLSNWTELDIWQYILQENIPIVPLYFAARRPVVERDGMLIMVDDDRMKLRPGEQVENRLVRFRTLGCYPLTGAIPSSAANLSDIVEEMLIARTSERQGRAIDRDEAGSMEKKKREGYF.

Positions Arg-281–Phe-300 are disordered.

It belongs to the PAPS reductase family. CysD subfamily. As to quaternary structure, heterodimer composed of CysD, the smaller subunit, and CysN.

The enzyme catalyses sulfate + ATP + H(+) = adenosine 5'-phosphosulfate + diphosphate. It functions in the pathway sulfur metabolism; hydrogen sulfide biosynthesis; sulfite from sulfate: step 1/3. In terms of biological role, with CysN forms the ATP sulfurylase (ATPS) that catalyzes the adenylation of sulfate producing adenosine 5'-phosphosulfate (APS) and diphosphate, the first enzymatic step in sulfur assimilation pathway. APS synthesis involves the formation of a high-energy phosphoric-sulfuric acid anhydride bond driven by GTP hydrolysis by CysN coupled to ATP hydrolysis by CysD. In Brucella canis (strain ATCC 23365 / NCTC 10854 / RM-666), this protein is Sulfate adenylyltransferase subunit 2.